The sequence spans 420 residues: UDP-N-acetylglucosamine 1-carboxyvinyltransferase (420 aa).

22-23 (KN) contributes to the phosphoenolpyruvate binding site. Arg-93 serves as a coordination point for UDP-N-acetyl-alpha-D-glucosamine. Residue Cys-117 is the Proton donor of the active site. Cys-117 is subject to 2-(S-cysteinyl)pyruvic acid O-phosphothioketal. UDP-N-acetyl-alpha-D-glucosamine-binding residues include Asp-306 and Ile-328.

It belongs to the EPSP synthase family. MurA subfamily.

The protein localises to the cytoplasm. It carries out the reaction phosphoenolpyruvate + UDP-N-acetyl-alpha-D-glucosamine = UDP-N-acetyl-3-O-(1-carboxyvinyl)-alpha-D-glucosamine + phosphate. Its pathway is cell wall biogenesis; peptidoglycan biosynthesis. In terms of biological role, cell wall formation. Adds enolpyruvyl to UDP-N-acetylglucosamine. In Colwellia psychrerythraea (strain 34H / ATCC BAA-681) (Vibrio psychroerythus), this protein is UDP-N-acetylglucosamine 1-carboxyvinyltransferase.